The chain runs to 117 residues: UPF0295 protein Bsph_0336 (117 aa).

The next 2 membrane-spanning stretches (helical) occupy residues 13–33 and 37–57; these read SFALALIFIGFIVMYGGIFFK and ILVLIFMTLGVLCIIGSTVVY.

Belongs to the UPF0295 family.

It localises to the cell membrane. The polypeptide is UPF0295 protein Bsph_0336 (Lysinibacillus sphaericus (strain C3-41)).